The sequence spans 443 residues: Postreplication repair E3 ubiquitin-protein ligase rad18 (443 aa).

The RING-type zinc-finger motif lies at 30-68 (CQVCKDFFDNPVITSCSHTFCSLCIRRCLSTEGKCPTCR). The disordered stretch occupies residues 106–157 (GTDDSGDLAAEEPASKKRKIEPNAIVGTDGLPEEGIRTRSQSRGASRQPQAT). A compositionally biased stretch (polar residues) spans 143 to 157 (TRSQSRGASRQPQAT). The segment at 175-202 (LVPCPVCGRRMKEEAVFRHLDSCTGTAE) adopts a UBZ4-type zinc-finger fold. Cys-178, Cys-181, His-193, and Cys-197 together coordinate Zn(2+). Positions 239–273 (LKDTVLRKKLKDLGIPNWGPRALLQRRHTEWLNLW) constitute an SAP domain. Polar residues-rich tracts occupy residues 350–363 (IPNA…TPRS) and 431–443 (PISS…KTPH). The interval 350-443 (IPNASQANSD…SSASTHKTPH (94 aa)) is disordered.

This sequence belongs to the RAD18 family. In terms of assembly, interacts with E2 UBC2, forming a complex with ubiquitin ligase activity.

It is found in the nucleus. The catalysed reaction is S-ubiquitinyl-[E2 ubiquitin-conjugating enzyme]-L-cysteine + [acceptor protein]-L-lysine = [E2 ubiquitin-conjugating enzyme]-L-cysteine + N(6)-ubiquitinyl-[acceptor protein]-L-lysine.. It functions in the pathway protein modification; protein ubiquitination. Its function is as follows. E3 RING-finger protein, member of the UBC2/RAD6 epistasis group. Associates to the E2 ubiquitin conjugating enzyme UBC2/RAD6 to form the UBC2-RAD18 ubiquitin ligase complex involved in postreplicative repair (PRR) of damaged DNA. The sequence is that of Postreplication repair E3 ubiquitin-protein ligase rad18 (uvsH) from Emericella nidulans (strain FGSC A4 / ATCC 38163 / CBS 112.46 / NRRL 194 / M139) (Aspergillus nidulans).